The following is a 430-amino-acid chain: UDP-N-acetylglucosamine 1-carboxyvinyltransferase 1 (430 aa).

22–23 contributes to the phosphoenolpyruvate binding site; sequence KN. UDP-N-acetyl-alpha-D-glucosamine is bound at residue R93. Catalysis depends on C117, which acts as the Proton donor. Residue C117 is modified to 2-(S-cysteinyl)pyruvic acid O-phosphothioketal. Residues 122-126, D305, and V327 contribute to the UDP-N-acetyl-alpha-D-glucosamine site; that span reads RPVDL.

Belongs to the EPSP synthase family. MurA subfamily.

It localises to the cytoplasm. The enzyme catalyses phosphoenolpyruvate + UDP-N-acetyl-alpha-D-glucosamine = UDP-N-acetyl-3-O-(1-carboxyvinyl)-alpha-D-glucosamine + phosphate. The protein operates within cell wall biogenesis; peptidoglycan biosynthesis. Its function is as follows. Cell wall formation. Adds enolpyruvyl to UDP-N-acetylglucosamine. This chain is UDP-N-acetylglucosamine 1-carboxyvinyltransferase 1, found in Listeria monocytogenes serovar 1/2a (strain ATCC BAA-679 / EGD-e).